Consider the following 127-residue polypeptide: Lysozyme C (127 aa).

Positions 1–127 constitute a C-type lysozyme domain; it reads KDIPRCELVK…KDLSSYVRGC (127 aa). 4 cysteine pairs are disulfide-bonded: C6–C127, C30–C115, C64–C80, and C76–C94. Catalysis depends on residues E35 and D52. Ca(2+) contacts are provided by K82, D85, N87, D90, and D91.

This sequence belongs to the glycosyl hydrolase 22 family. As to quaternary structure, monomer. It depends on Ca(2+) as a cofactor.

The protein resides in the secreted. It catalyses the reaction Hydrolysis of (1-&gt;4)-beta-linkages between N-acetylmuramic acid and N-acetyl-D-glucosamine residues in a peptidoglycan and between N-acetyl-D-glucosamine residues in chitodextrins.. In terms of biological role, lysozymes have primarily a bacteriolytic function; those in tissues and body fluids are associated with the monocyte-macrophage system and enhance the activity of immunoagents. This chain is Lysozyme C (LYZ), found in Columba livia (Rock dove).